Consider the following 327-residue polypeptide: Malate dehydrogenase (327 aa).

12 to 18 (GAAGQIG) is an NAD(+) binding site. 2 residues coordinate substrate: Arg-93 and Arg-99. NAD(+) is bound by residues Asn-106, Gln-113, and 130–132 (VGN). Substrate is bound by residues Asn-132 and Arg-163. The active-site Proton acceptor is His-188.

Belongs to the LDH/MDH superfamily. MDH type 2 family.

It carries out the reaction (S)-malate + NAD(+) = oxaloacetate + NADH + H(+). Catalyzes the reversible oxidation of malate to oxaloacetate. In Cupriavidus metallidurans (strain ATCC 43123 / DSM 2839 / NBRC 102507 / CH34) (Ralstonia metallidurans), this protein is Malate dehydrogenase.